Reading from the N-terminus, the 195-residue chain is MLPPALNIPKWLEANSHLLQPPVNNYCVYHPSSPATSGYTVMIVGGPNARTDYHINSTPEFFYQYRGSMLLRTVDRSVSPPAFQDIPIHEGSLFLLPANTPHCPVRFADTVGVVMEVPRAPDATDTMLWFCPNSACKQVVWEKRFVCTDLGTQVKEVVEEFSADLAKRTCAACGTVAESRYKEGELTQPPRFPPE.

An O2-binding site is contributed by arginine 50. Fe cation-binding residues include histidine 54, glutamate 60, and histidine 102. Glutamate 60 is a binding site for substrate. 2 residues coordinate substrate: arginine 106 and glutamate 116. A divalent metal cation contacts are provided by cysteine 131, cysteine 136, cysteine 170, and cysteine 173.

Belongs to the 3-HAO family. Fe(2+) serves as cofactor.

Its subcellular location is the cytoplasm. It carries out the reaction 3-hydroxyanthranilate + O2 = (2Z,4Z)-2-amino-3-carboxymuconate 6-semialdehyde. Its pathway is cofactor biosynthesis; NAD(+) biosynthesis; quinolinate from L-kynurenine: step 3/3. In terms of biological role, catalyzes the oxidative ring opening of 3-hydroxyanthranilate to 2-amino-3-carboxymuconate semialdehyde, which spontaneously cyclizes to quinolinate. In Aspergillus terreus (strain NIH 2624 / FGSC A1156), this protein is 3-hydroxyanthranilate 3,4-dioxygenase (bna1).